The following is a 60-amino-acid chain: MSQHLVPEAKNGLSKFKNEVANEMGVPFSDYNGDLSSRQCGSVGGEMVKRMVEKYEQSMK.

This sequence belongs to the alpha/beta-type SASP family. Post-translationally, SASP are degraded in the first minutes of spore germination and provide amino acids for both new protein synthesis and metabolism.

In terms of biological role, SASP are bound to spore DNA. They are double-stranded DNA-binding proteins that cause DNA to change to an a-like conformation. They protect the DNA backbone from chemical and enzymatic cleavage and are thus involved in dormant spore's high resistance to UV light. In Clostridium perfringens (strain 13 / Type A), this protein is Small, acid-soluble spore protein C2 (sspC2).